The chain runs to 191 residues: Probable nicotinate-nucleotide adenylyltransferase (191 aa).

Belongs to the NadD family.

The enzyme catalyses nicotinate beta-D-ribonucleotide + ATP + H(+) = deamido-NAD(+) + diphosphate. It participates in cofactor biosynthesis; NAD(+) biosynthesis; deamido-NAD(+) from nicotinate D-ribonucleotide: step 1/1. Catalyzes the reversible adenylation of nicotinate mononucleotide (NaMN) to nicotinic acid adenine dinucleotide (NaAD). The chain is Probable nicotinate-nucleotide adenylyltransferase from Oceanobacillus iheyensis (strain DSM 14371 / CIP 107618 / JCM 11309 / KCTC 3954 / HTE831).